We begin with the raw amino-acid sequence, 99 residues long: Small ribosomal subunit protein uS19c (99 aa).

This sequence belongs to the universal ribosomal protein uS19 family.

Its subcellular location is the plastid. The protein localises to the chloroplast. Its function is as follows. Protein S19 forms a complex with S13 that binds strongly to the 16S ribosomal RNA. This Oenothera biennis (German evening primrose) protein is Small ribosomal subunit protein uS19c.